Here is a 1351-residue protein sequence, read N- to C-terminus: Transcriptional regulator ovo (1351 aa).

The segment at 1 to 31 (MPKIFLIKNRLHQQQQRLLESQNLLQHKNQD) is required for Ubr3 binding and tal-dependent proteolytic processing. 10 disordered regions span residues 22–77 (QNLL…SDQQ), 100–119 (LDHL…NPNQ), 184–397 (NSPI…SDEE), 447–554 (AGHG…HFNA), 640–665 (SNSK…GQTS), 778–807 (DDEE…PVEQ), 834–887 (GSNQ…YQHA), 916–1000 (LLSQ…PSPT), 1023–1044 (PMSS…GSSN), and 1113–1192 (SKHG…DSSS). Residues 49-60 (SPTPTSQPPPEP) show a composition bias toward pro residues. Low complexity-rich tracts occupy residues 61–72 (QGQGQQVLGQVP) and 104–119 (NQNQ…NPNQ). Basic and acidic residues predominate over residues 205–232 (EKEKPAEREREKSDERTEQVEKEERVER). Positions 233–242 (EEEEDDEVDV) are enriched in acidic residues. The segment covering 262 to 272 (QRKEYPQEPKD) has biased composition (basic and acidic residues). Residues 324-340 (TPPPADQRPSPPPPRDP) are compositionally biased toward pro residues. Residues 447 to 486 (AGHGRNSSSSSGAAGQGFQSSGFGSQNSGSGSSSGNQNAG) are compositionally biased toward low complexity. Positions 487–505 (SGAGSPGSGAGGGGGMGGG) are enriched in gly residues. Residues 530 to 552 (KSGQQSTASNNTGQSPGANHSHF) are compositionally biased toward polar residues. Residues 644–653 (FHNHHHHHQH) are compositionally biased toward basic residues. The segment covering 793–807 (STPSLTPDSVTPVEQ) has biased composition (polar residues). Composition is skewed to low complexity over residues 835-878 (SNQQ…HVQQ), 916-962 (LLSQ…QQQQ), 970-979 (QQQQQPQPQS), 1025-1044 (SSSS…GSSN), and 1121-1175 (HQQQ…HGSA). 4 C2H2-type zinc fingers span residues 1197–1219 (FVCR…MKCH), 1225–1247 (YLCT…TRTH), 1253–1276 (YKCN…QKVH), and 1292–1315 (YVCE…KNNH).

In terms of assembly, interacts (via N-terminus) with Ubr3; the interaction is mediated by tal. N-terminus is proteolytically cleaved and ubiquitinated via a tal-dependent mechanism, leading to the proteolytic degradation of the N-terminus and the production of transcriptional activator shavenbaby, a truncated form with transcriptional activator activity.

The protein resides in the cytoplasm. The protein localises to the nucleus. It localises to the nucleoplasm. In terms of biological role, transcriptional regulator with essential functions in the germline and soma. Plays an essential role in regulating the formation of apical cell extensions such as denticles and aristae, and initiating cytoskeletal remodeling during epidermal differentiation. Its function is as follows. Transcriptional repressor which functions in postembryonic development. The full-length unprocessed form acts as a transcriptional repressor (Transcriptional repressor svb). Functionally, transcriptional activator which initiates trichome development and also promotes tarsal joint development. Has an essential somatic role regulating the tal-dependent formation of trichomes, and initiating cytoskeletal remodeling during epidermal differentiation. Function with SoxN is required for correct denticle morphogenesis on the embryonic epidermis. SoxN and svb appear to act both independently and in conjunction with each other to activate certain genes involved in denticle morphogenesis; Svb appears to be involved in regulating denticle length whereas SoxN regulates the denticle base circumference. Also functions in the development of other apical cell extensions such as bristles. Also has an important role in tarsal joint development, repressing expression of the N ligand Dl and defining its signaling boundary. Transcriptional repressor which is specifically involved in female germline development, where it functions antagonistically to isoform D. Negatively regulates expression of otu and may also have autoregulatory activity. Negatively regulates expression of piwi in the primordial germ cells (PGCs). In terms of biological role, transcriptional activator which is specifically involved in female germline development, where it functions antagonistically to isoform C. Necessary and sufficient for normal oogenesis. Required in the primordial germ cells (PGCs) for normal development of male and female germline cells. Plays a role in germline sex determination. Binds the promoter DNA and positively regulates the transcription of the otu gene in a stage-specific manner. May have autoregulatory activity. In Drosophila melanogaster (Fruit fly), this protein is Transcriptional regulator ovo.